The chain runs to 168 residues: Pleiotrophin (168 aa).

The signal sequence occupies residues 1–32; sequence MQTPQYLQQRRKFAAAFLAFIFILAAVDTAEA. Intrachain disulfides connect Cys-47-Cys-76, Cys-55-Cys-85, Cys-62-Cys-89, Cys-99-Cys-131, and Cys-109-Cys-141. Chondroitin sulfate binding stretches follow at residues 92-99 and 123-131; these read KKQFGAEC and KRALHNADC. A disordered region spans residues 141–168; it reads CGKLTKSKPQAESKKKKKEGKKQEKMLD. Residues 147-168 are chondroitin sulfate A binding; sequence SKPQAESKKKKKEGKKQEKMLD.

As to quaternary structure, interacts with ALK and NEK6. Interacts with PTPRZ1 (via chondroitin sulfate groups); promotes formation of homooligomers; oligomerization impairs tyrosine phosphatase activity. Forms a complex with PTPRZ1 and CTNNB1; this complex inactivates PTPRZ1 protein tyrosine phosphatase activity through PTN interaction and stimulates tyrosine phosphorylation of CTNNB1. Interacts with ITGB3 and ITGA5. Forms a complex with PTPRZ1 and integrin alpha-V/beta-3 (ITGAV:ITGB3) that stimulates endothelial cell migration through ITGB3 'Tyr-773' phosphorylation. Interacts with SDC3 (via heparan sulfate chains); this interaction mediates the neurite outgrowth-promoting signal from PTN to the cytoskeleton of growing neurites; this interaction mediates osteoblast recruitment. Interacts with GPC2 (via heparan sulfate); this interaction promotes neurite outgrowth through binding of PTN with chondroitin sulfate of proteoglycans, thereby releasing PTPRS of chondroitin sulfate proteoglycans (CSPGs) and leading to binding with heparan sulfate of GPC2. Phosphorylated by NEK6.

It is found in the secreted. In terms of biological role, secreted growth factor that mediates its signal through cell-surface proteoglycan and non-proteoglycan receptors. Binds cell-surface proteoglycan receptor via their chondroitin sulfate (CS) groups. Thereby regulates many processes like cell proliferation, cell survival, cell growth, cell differentiation and cell migration in several tissues namely neuron and bone. Also plays a role in synaptic plasticity and learning-related behavior by inhibiting long-term synaptic potentiation. Binds PTPRZ1, leading to neutralization of the negative charges of the CS chains of PTPRZ1, inducing PTPRZ1 clustering, thereby causing the dimerization and inactivation of its phosphatase activity leading to increased tyrosine phosphorylation of each of the PTPRZ1 substrates like ALK, CTNNB1 or AFAP1L2 in order to activate the PI3K-AKT pathway. Through PTPRZ1 binding controls oligodendrocyte precursor cell differentiation by enhancing the phosphorylation of AFAP1L2 in order to activate the PI3K-AKT pathway. Forms a complex with PTPRZ1 and integrin alpha-V/beta-3 (ITGAV:ITGB3) that stimulates endothelial cell migration through SRC dephosphorylation and activation that consequently leads to ITGB3 'Tyr-773' phosphorylation. In adult hippocampus promotes dendritic arborization, spine development, and functional integration and connectivity of newborn granule neurons through ALK by activating AKT signaling pathway. Binds GPC2 and chondroitin sulfate proteoglycans (CSPGs) at the neuron surface, leading to abrogation of binding between PTPRS and CSPGs and neurite outgrowth promotion. Binds SDC3 and mediates bone formation by recruiting and attaching osteoblasts/osteoblast precursors to the sites for new bone deposition. Binds ALK and promotes cell survival and cell proliferation through MAPK pathway activation. Inhibits proliferation and enhances differentiation of neural stem cells by inhibiting FGF2-induced fibroblast growth factor receptor signaling pathway. Mediates regulatory mechanisms in normal hemostasis and in hematopoietic regeneration and in maintaining the balance of myeloid and lymphoid regeneration. In addition may play a role in the female reproductive system, auditory response and the progesterone-induced decidualization pathway. In Bos taurus (Bovine), this protein is Pleiotrophin.